The following is a 249-amino-acid chain: Ciliogenesis and planar polarity effector 2 (249 aa).

The segment at 46–249 (PADVAAYKVF…VIAGLVGGAE (204 aa)) is small GTPase-like. GTP contacts are provided by residues 58-65 (GKSGVGKT) and 171-174 (TKLD).

It belongs to the small GTPase superfamily. Rab family. Interacts with fuz.

The protein resides in the cytoplasm. It is found in the cytoskeleton. The protein localises to the cilium basal body. Functionally, potential effector of the planar cell polarity signaling pathway. Plays a role in targeted membrane trafficking most probably at the level of vesicle fusion with membranes. Involved in cilium biogenesis by regulating the transport of cargo proteins to the basal body and to the apical tips of cilia. More generally involved in exocytosis in secretory cells. The protein is Ciliogenesis and planar polarity effector 2 of Xenopus laevis (African clawed frog).